Here is a 132-residue protein sequence, read N- to C-terminus: MTMTDPIADMLTRLRNANSAYHDTVSMPYSKLKSHIAEILQAEGYITSWTVEDAEVGKKLTLDLKFGPNRERAIAGLRRVSKPGLRVYAKSTNLPRVLGGLGVAILSTSSGLLTDKQANKKGVGGEVLAYVW.

It belongs to the universal ribosomal protein uS8 family. Part of the 30S ribosomal subunit. Contacts proteins S5 and S12.

Functionally, one of the primary rRNA binding proteins, it binds directly to 16S rRNA central domain where it helps coordinate assembly of the platform of the 30S subunit. The chain is Small ribosomal subunit protein uS8 from Kineococcus radiotolerans (strain ATCC BAA-149 / DSM 14245 / SRS30216).